The following is a 650-amino-acid chain: Fructose-1,6-bisphosphatase class 3 (650 aa).

It belongs to the FBPase class 3 family. Requires Mn(2+) as cofactor.

The enzyme catalyses beta-D-fructose 1,6-bisphosphate + H2O = beta-D-fructose 6-phosphate + phosphate. Its pathway is carbohydrate biosynthesis; gluconeogenesis. This chain is Fructose-1,6-bisphosphatase class 3, found in Staphylococcus saprophyticus subsp. saprophyticus (strain ATCC 15305 / DSM 20229 / NCIMB 8711 / NCTC 7292 / S-41).